A 435-amino-acid chain; its full sequence is Nucleoredoxin (435 aa).

The residue at position 2 (serine 2) is an N-acetylserine. The Thioredoxin domain occupies proline 167–glutamate 314.

It belongs to the nucleoredoxin family. Associates with the phosphatase 2A holoenzyme. Interacts with PPP2CA; the interaction is direct. Interacts with DVL1 (via PDZ domain); the interaction is direct and regulated by oxidative stress. As to expression, widely expressed with higher expression in testis and skin.

It localises to the cytoplasm. The protein resides in the cytosol. It is found in the nucleus. It carries out the reaction [protein]-dithiol + NAD(+) = [protein]-disulfide + NADH + H(+). The enzyme catalyses [protein]-dithiol + NADP(+) = [protein]-disulfide + NADPH + H(+). Functions as a redox-dependent negative regulator of the Wnt signaling pathway, possibly by preventing ubiquitination of DVL3 by the BCR(KLHL12) complex. May also function as a transcriptional regulator act as a regulator of protein phosphatase 2A (PP2A). The polypeptide is Nucleoredoxin (Nxn) (Mus musculus (Mouse)).